Reading from the N-terminus, the 483-residue chain is Glutamyl-tRNA(Gln) amidotransferase subunit A (483 aa).

Active-site charge relay system residues include Lys76 and Ser151. Ser175 serves as the catalytic Acyl-ester intermediate.

The protein belongs to the amidase family. GatA subfamily. In terms of assembly, heterotrimer of A, B and C subunits.

It carries out the reaction L-glutamyl-tRNA(Gln) + L-glutamine + ATP + H2O = L-glutaminyl-tRNA(Gln) + L-glutamate + ADP + phosphate + H(+). Its function is as follows. Allows the formation of correctly charged Gln-tRNA(Gln) through the transamidation of misacylated Glu-tRNA(Gln) in organisms which lack glutaminyl-tRNA synthetase. The reaction takes place in the presence of glutamine and ATP through an activated gamma-phospho-Glu-tRNA(Gln). In Pseudomonas fluorescens (strain ATCC BAA-477 / NRRL B-23932 / Pf-5), this protein is Glutamyl-tRNA(Gln) amidotransferase subunit A.